The sequence spans 544 residues: Phosphoacetylglucosamine mutase (544 aa).

The active-site Phosphoserine intermediate is the Ser-66. Mg(2+)-binding residues include Ser-66, Asp-290, Asp-292, and Asp-294. Residues 387 to 389, 512 to 516, and Arg-521 contribute to the substrate site; these read EAN and RASGT.

The protein belongs to the phosphohexose mutase family. The cofactor is Mg(2+).

The enzyme catalyses N-acetyl-alpha-D-glucosamine 1-phosphate = N-acetyl-D-glucosamine 6-phosphate. The protein operates within nucleotide-sugar biosynthesis; UDP-N-acetyl-alpha-D-glucosamine biosynthesis; N-acetyl-alpha-D-glucosamine 1-phosphate from alpha-D-glucosamine 6-phosphate (route I): step 2/2. Functionally, catalyzes the conversion of GlcNAc-6-P into GlcNAc-1-P during the synthesis of uridine diphosphate/UDP-GlcNAc, which is a biosynthetic precursor of chitin and also supplies the amino sugars for N-linked oligosaccharides of glycoproteins. This Candida albicans (Yeast) protein is Phosphoacetylglucosamine mutase.